A 304-amino-acid chain; its full sequence is Acetylglutamate kinase (304 aa).

Substrate contacts are provided by residues 75-76 (GG), arginine 97, and asparagine 196.

The protein belongs to the acetylglutamate kinase family. ArgB subfamily.

The protein localises to the cytoplasm. The catalysed reaction is N-acetyl-L-glutamate + ATP = N-acetyl-L-glutamyl 5-phosphate + ADP. It functions in the pathway amino-acid biosynthesis; L-arginine biosynthesis; N(2)-acetyl-L-ornithine from L-glutamate: step 2/4. Its function is as follows. Catalyzes the ATP-dependent phosphorylation of N-acetyl-L-glutamate. The polypeptide is Acetylglutamate kinase (Corynebacterium urealyticum (strain ATCC 43042 / DSM 7109)).